The chain runs to 283 residues: MQQFKWINILKGFAMGTSDLVPGVSGGTIALLLGIYNQFIASISGIFSRRFWPSFTFLIPIIIGMLLAMGSLSNLFNYLLSQHHIPTMFFFGGLIIGIVPYLLKISNYKTSFTTKHYMMVIAGIAILIVITLMNNGDKHAGETLTLSTSLIIKYFIAGMCASSAMLLPGISGSFMLLVFGVYGTVMLAISEVVKLNFAGLPILLAVGFGVLAGFIISSKIIQYFLTHHKLMTFALIIGFVVGSLFAVFPGLPTNIVMWFVSLVVFIIGFIVSLTLGRITAENE.

A run of 9 helical transmembrane segments spans residues 27–47 (GTIA…SGIF), 51–71 (FWPS…AMGS), 85–105 (IPTM…LLKI), 112–132 (FTTK…VITL), 148–168 (TSLI…MLLP), 169–189 (GISG…MLAI), 197–217 (FAGL…FIIS), 230–250 (LMTF…VFPG), and 255–275 (IVMW…SLTL).

Belongs to the PopT family.

The protein localises to the cell membrane. Active in alkaline conditions. Its function is as follows. Flippase that catalyzes the transport of undecaprenyl phosphate (UndP) across the cytoplasmic membrane, from the external side to the cytoplasmic side. Is involved in UndP recycling during peptidoglycan synthesis. Necessary for peptidoglycan maintenance. The protein is Polyprenyl-phosphate transporter of Staphylococcus aureus (strain NCTC 8325 / PS 47).